A 206-amino-acid polypeptide reads, in one-letter code: Ras-related protein ralB-A (206 aa).

Residue 21–28 (GSGGVGKS) coordinates GTP. An Effector region motif is present at residues 43–51 (YEPTKADSY). Residues 68–72 (DTAGQ) and 128–131 (NKSD) contribute to the GTP site. A compositionally biased stretch (basic and acidic residues) spans 180 to 189 (KMSENKDKNG). Residues 180–206 (KMSENKDKNGKKSGKSKKGFKQRCCLL) are disordered. The span at 190 to 200 (KKSGKSKKGFK) shows a compositional bias: basic residues. Cysteine 203 carries the post-translational modification Cysteine methyl ester. Cysteine 203 is lipidated: S-geranylgeranyl cysteine. The propeptide at 204–206 (CLL) is removed in mature form.

This sequence belongs to the small GTPase superfamily. Ras family. As to quaternary structure, interacts with ralbp1 and rap1gds1. In terms of tissue distribution, weakly expressed in adult tissues and highest levels were found in heart, brain and testes.

The protein localises to the cell membrane. It is found in the midbody. It carries out the reaction GTP + H2O = GDP + phosphate + H(+). Functionally, multifunctional GTPase involved in a variety of cellular processes including gene expression, cell migration, cell proliferation, oncogenic transformation and membrane trafficking. Accomplishes its multiple functions by interacting with distinct downstream effectors. Acts as a GTP sensor for GTP-dependent exocytosis of dense core vesicles. Required both to stabilize the assembly of the exocyst complex and to localize functional exocyst complexes to the leading edge of migrating cells. Required for suppression of apoptosis. In late stages of cytokinesis, upon completion of the bridge formation between dividing cells, mediates exocyst recruitment to the midbody to drive abscission. Regulates the actin cytoskeleton to play a role in gastrulation or neurulation. During the cleavage stages, the GTP-bound form induces a cortical reaction that affects the localization of pigment granules. Activated by the FGF pathway via ras and ral-GDS, but independently of raf. Directs ralbp1 to the plasma membrane. Involved in ligand-dependent receptor mediated endocytosis of the EGF and insulin receptors. The chain is Ras-related protein ralB-A (ralb-a) from Xenopus laevis (African clawed frog).